The following is a 198-amino-acid chain: Dephospho-CoA kinase (198 aa).

The 195-residue stretch at 4 to 198 (FLGLTGGIAS…LSDLLQEIGR (195 aa)) folds into the DPCK domain. Position 12–17 (12–17 (ASGKST)) interacts with ATP.

The protein belongs to the CoaE family.

The protein resides in the cytoplasm. It catalyses the reaction 3'-dephospho-CoA + ATP = ADP + CoA + H(+). The protein operates within cofactor biosynthesis; coenzyme A biosynthesis; CoA from (R)-pantothenate: step 5/5. Functionally, catalyzes the phosphorylation of the 3'-hydroxyl group of dephosphocoenzyme A to form coenzyme A. The protein is Dephospho-CoA kinase of Lactobacillus johnsonii (strain CNCM I-12250 / La1 / NCC 533).